The sequence spans 504 residues: Probable cytochrome P450 513F1 (504 aa).

A helical membrane pass occupies residues 1 to 21 (MILSLLFLFVITLYFLIPSRI). Cys-449 contributes to the heme binding site.

It belongs to the cytochrome P450 family. Heme serves as cofactor.

It localises to the membrane. This Dictyostelium discoideum (Social amoeba) protein is Probable cytochrome P450 513F1 (cyp513F1).